Consider the following 179-residue polypeptide: MAKTAMAYKEKMKELSMLSLICSCFYPEPRNINIYTYDDMEVKQINKRASGQAFELILKPPSPISEAPRTLASPKKKDLSLEEIQKKLEAAEGRRKSQEAQVLKQLAEKREHEREVLQKALEENNNFSKMAEEKLILKMEQIKENREANLAAIIERLQEKERHAAEVRRNKELQVELSG.

The tract at residues 1-26 is membrane attachment; it reads MAKTAMAYKEKMKELSMLSLICSCFY. Ser-16 is subject to Phosphoserine. Residues Cys-22 and Cys-24 are each lipidated (S-palmitoyl cysteine). The region spanning 38–179 is the SLD domain; that stretch reads DDMEVKQINK…NKELQVELSG (142 aa). The regulatory/phosphorylation domain stretch occupies residues 39-96; sequence DMEVKQINKRASGQAFELILKPPSPISEAPRTLASPKKKDLSLEEIQKKLEAAEGRRK. The residue at position 50 (Ser-50) is a Phosphoserine. Ser-62 and Ser-73 each carry phosphoserine; by MAPK8. Positions 75–179 form a coiled coil; the sequence is KKKDLSLEEI…NKELQVELSG (105 aa). Phosphoserine is present on residues Ser-80 and Ser-97.

This sequence belongs to the stathmin family. In terms of assembly, interacts with ITM2C. Interacts with MAPK8. Interacts with KIFBP. Interacts (via the N-terminal region) with CIB1 (via C-terminal region); the interaction is direct, occurs in a calcium-dependent manner and attenuates the neurite outgrowth inhibition of STMN2. Post-translationally, sumoylated. In terms of processing, phosphorylated by MAPK9 and MAPK10 in the developing brain cortex. Phosphorylated mostly by MAPK8. N-terminal palmitoylation promotes specific anchoring to the cytosolic leaflet of Golgi membranes and subsequent vesicular trafficking along dendrites and axons. Neuronal Stathmins are substrates for palmitoyltransferases ZDHHC3, ZDHHC7 and ZDHHC15. In terms of tissue distribution, expressed in neurons (at protein level). Present in growth cones and abundant in developing neurons.

It localises to the cytoplasm. The protein localises to the perinuclear region. Its subcellular location is the cell projection. The protein resides in the growth cone. It is found in the axon. It localises to the membrane. The protein localises to the golgi apparatus. Its subcellular location is the endosome. The protein resides in the lamellipodium. Its function is as follows. Regulator of microtubule stability. When phosphorylated by MAPK8, stabilizes microtubules and consequently controls neurite length in cortical neurons. In the developing brain, negatively regulates the rate of exit from multipolar stage and retards radial migration from the ventricular zone. This is Stathmin-2 (Stmn2) from Rattus norvegicus (Rat).